The following is a 288-amino-acid chain: Acetyl-coenzyme A carboxylase carboxyl transferase subunit beta (288 aa).

The region spanning 34–288 (LFAKCPACKH…HLVAFHGGGQ (255 aa)) is the CoA carboxyltransferase N-terminal domain. Zn(2+) contacts are provided by Cys-38, Cys-41, Cys-56, and Cys-59. The C4-type zinc-finger motif lies at 38 to 59 (CPACKHMIYKKDLGLAKICPTC).

The protein belongs to the AccD/PCCB family. In terms of assembly, acetyl-CoA carboxylase is a heterohexamer composed of biotin carboxyl carrier protein (AccB), biotin carboxylase (AccC) and two subunits each of ACCase subunit alpha (AccA) and ACCase subunit beta (AccD). The cofactor is Zn(2+).

It is found in the cytoplasm. The enzyme catalyses N(6)-carboxybiotinyl-L-lysyl-[protein] + acetyl-CoA = N(6)-biotinyl-L-lysyl-[protein] + malonyl-CoA. Its pathway is lipid metabolism; malonyl-CoA biosynthesis; malonyl-CoA from acetyl-CoA: step 1/1. Its function is as follows. Component of the acetyl coenzyme A carboxylase (ACC) complex. Biotin carboxylase (BC) catalyzes the carboxylation of biotin on its carrier protein (BCCP) and then the CO(2) group is transferred by the transcarboxylase to acetyl-CoA to form malonyl-CoA. The chain is Acetyl-coenzyme A carboxylase carboxyl transferase subunit beta from Streptococcus pyogenes serotype M28 (strain MGAS6180).